A 331-amino-acid chain; its full sequence is Pantothenate kinase (331 aa).

ATP is bound at residue 109 to 116 (GSVAVGKS).

Belongs to the prokaryotic pantothenate kinase family.

It is found in the cytoplasm. It carries out the reaction (R)-pantothenate + ATP = (R)-4'-phosphopantothenate + ADP + H(+). It functions in the pathway cofactor biosynthesis; coenzyme A biosynthesis; CoA from (R)-pantothenate: step 1/5. The sequence is that of Pantothenate kinase from Rhizobium etli (strain CIAT 652).